The following is a 126-amino-acid chain: Aspartate 1-decarboxylase (126 aa).

Residue Ser-25 is the Schiff-base intermediate with substrate; via pyruvic acid of the active site. At Ser-25 the chain carries Pyruvic acid (Ser). Residue Thr-57 participates in substrate binding. The active-site Proton donor is Tyr-58. 73 to 75 (GGA) contacts substrate.

This sequence belongs to the PanD family. In terms of assembly, heterooctamer of four alpha and four beta subunits. Requires pyruvate as cofactor. Post-translationally, is synthesized initially as an inactive proenzyme, which is activated by self-cleavage at a specific serine bond to produce a beta-subunit with a hydroxyl group at its C-terminus and an alpha-subunit with a pyruvoyl group at its N-terminus.

It is found in the cytoplasm. The enzyme catalyses L-aspartate + H(+) = beta-alanine + CO2. It participates in cofactor biosynthesis; (R)-pantothenate biosynthesis; beta-alanine from L-aspartate: step 1/1. Its function is as follows. Catalyzes the pyruvoyl-dependent decarboxylation of aspartate to produce beta-alanine. This chain is Aspartate 1-decarboxylase, found in Xanthomonas campestris pv. campestris (strain B100).